Consider the following 1370-residue polypeptide: Putative Polycomb group protein ASXL2 (1370 aa).

One can recognise an HTH HARE-type domain in the interval 11 to 86 (RTWAEAAKTV…RMGVYTLKKD (76 aa)). Residues 92 to 216 (KELSECSEES…DSVPAKPGQM (125 aa)) are disordered. The segment covering 103–120 (DGQSDSHSSDNSSSSDGG) has biased composition (low complexity). The segment covering 141–152 (PPSPPSGCPSPT) has biased composition (pro residues). Residue S150 is modified to Phosphoserine. The Nuclear localization signal signature appears at 178–182 (QQKKK). Residues 186 to 198 (CRPSMSISNQHLS) show a composition bias toward polar residues. The region spanning 229-338 (PDSILVNTNL…FENYYGQSSG (110 aa)) is the DEUBAD domain. Residues 258-262 (LLLLL) carry the LXXLL motif motif. Disordered regions lie at residues 340–487 (SLED…AGLQ) and 516–535 (QESL…SSWE). Residues 398–412 (QKEENQDEARPDSKS) show a composition bias toward basic and acidic residues. A phosphoserine mark is found at S477, S524, S553, and S590. Asymmetric dimethylarginine is present on R594. The residue at position 601 (S601) is a Phosphoserine. Over residues 643–652 (IPGPGPGGGQ) the composition is skewed to gly residues. Disordered regions lie at residues 643–734 (IPGP…LASS), 805–891 (PKAG…SSIP), and 1103–1175 (GHAD…VSEQ). 2 stretches are compositionally biased toward polar residues: residues 719–734 (AQLQ…LASS) and 830–839 (MTSSPVTTAS). Residues 849-870 (SGTATSTGSAPSSSTLPAASSL) are compositionally biased toward low complexity. Polar residues predominate over residues 871-891 (KTPGTSANMNGPISRTSSSIP). Positions 1119-1131 (DESDEDRVGDEQE) are enriched in acidic residues. S1121 and S1254 each carry phosphoserine. The PHD-type; atypical zinc finger occupies 1332–1369 (PSKCYCRLKAMIMCKGCGAFCHDDCIGPSKLCVSCLVV).

The protein belongs to the Asx family. As to quaternary structure, core component of the polycomb repressive deubiquitinase (PR-DUB) complex, at least composed of BAP1, one of ASXL1, ASXL2 or (probably) ASXL3, and one of MBD5 or MBD6. Distinct combinations of ASXL and MBD proteins may preferentially bind specific histone modification marks. The PR-DUB core associates with a number of accessory proteins, including FOXK1, FOXK2, KDM1B, HCFC1 and OGT; KDM1B specifically associates with ASXL2 PR-DUB complexes. Interacts (via PHD domain) with MBD5 and MBD6 (via MBD domain); the interaction is probably direct and mediates association of MBD proteins with the PR-DUB core. Interacts with PPARA and PPARG.

Its subcellular location is the nucleus. Putative Polycomb group (PcG) protein. PcG proteins act by forming multiprotein complexes, which are required to maintain the transcriptionally repressive state of homeotic genes throughout development. PcG proteins are not required to initiate repression, but to maintain it during later stages of development. They probably act via methylation of histones, rendering chromatin heritably changed in its expressibility. Involved in transcriptional regulation mediated by ligand-bound nuclear hormone receptors, such as peroxisome proliferator-activated receptor gamma (PPARG). Acts as a coactivator for PPARG and enhances its adipocyte differentiation-inducing activity; the function seems to involve differential recruitment of acetylated and methylated histone H3. Non-catalytic component of the PR-DUB complex, a complex that specifically mediates deubiquitination of histone H2A monoubiquitinated at 'Lys-119' (H2AK119ub1). The PR-DUB complex is an epigenetic regulator of gene expression and acts as a transcriptional coactivator, affecting genes involved in development, cell communication, signaling, cell proliferation and cell viability. ASXL1, ASXL2 and ASXL3 function redundantly in the PR-DUB complex. The ASXL proteins are essential for chromatin recruitment and transcriptional activation of associated genes. ASXL1 and ASXL2 are important for BAP1 protein stability. This Mus musculus (Mouse) protein is Putative Polycomb group protein ASXL2 (Asxl2).